Reading from the N-terminus, the 364-residue chain is Geranylfarnesyl diphosphate synthase, chloroplastic (364 aa).

A chloroplast-targeting transit peptide spans 1 to 51; that stretch reads MSHCTIFLYKYFPGKPRYQHCSFLHPLNHKLKSLFLPITGSRFLSNSTFSV. Isopentenyl diphosphate contacts are provided by Lys-72, Lys-111, and His-143. Mg(2+) contacts are provided by Asp-150 and Asp-156. Arg-161 contributes to the dimethylallyl diphosphate binding site. Arg-162 provides a ligand contact to isopentenyl diphosphate. 6 residues coordinate dimethylallyl diphosphate: Lys-249, Thr-250, Gln-287, Asp-294, Lys-304, and Lys-314.

It belongs to the FPP/GGPP synthase family. As to quaternary structure, monomer. The cofactor is Mg(2+). Strongly expressed in glandular trichomes, and, at low levels, in leaves, stems and flowers.

Its subcellular location is the plastid. The protein localises to the chloroplast. The catalysed reaction is isopentenyl diphosphate + (2E,6E,10E)-geranylgeranyl diphosphate = (2E,6E,10E,14E)-geranylfarnesyl diphosphate + diphosphate. It carries out the reaction 2 isopentenyl diphosphate + (2E,6E)-farnesyl diphosphate = (2E,6E,10E,14E)-geranylfarnesyl diphosphate + 2 diphosphate. It catalyses the reaction 3 isopentenyl diphosphate + (2E)-geranyl diphosphate = (2E,6E,10E,14E)-geranylfarnesyl diphosphate + 3 diphosphate. The enzyme catalyses 4 isopentenyl diphosphate + dimethylallyl diphosphate = (2E,6E,10E,14E)-geranylfarnesyl diphosphate + 4 diphosphate. It functions in the pathway secondary metabolite biosynthesis; terpenoid biosynthesis. It participates in isoprenoid biosynthesis. Involved in the biosynthesis of leucosceptrane sesterterpenoids natural products, which are playing defensive roles toward herbivorus insects (e.g. Spodoptera exigua). Catalyzes the condensation of isopentenyl pyrophosphate (IDP) with the allylic pyrophosphates to yield geranylfarnesyl diphosphate (GFDP), the C(25) prenyl diphosphate precursor to all sesterterpenoids. Geranylgeranyl diphosphate (GGPP) is the preferred substrate, however dimethylallyl diphosphate (DMADP), farnesyl diphosphate (FDP) and geranyl diphosphate (GDP) can also be used as allylic substrate. The chain is Geranylfarnesyl diphosphate synthase, chloroplastic from Leucosceptrum canum (Hairy white-wand).